The chain runs to 89 residues: Small ribosomal subunit protein uS15 (89 aa).

Belongs to the universal ribosomal protein uS15 family. Part of the 30S ribosomal subunit. Forms a bridge to the 50S subunit in the 70S ribosome, contacting the 23S rRNA.

Functionally, one of the primary rRNA binding proteins, it binds directly to 16S rRNA where it helps nucleate assembly of the platform of the 30S subunit by binding and bridging several RNA helices of the 16S rRNA. Its function is as follows. Forms an intersubunit bridge (bridge B4) with the 23S rRNA of the 50S subunit in the ribosome. In Geobacillus stearothermophilus (Bacillus stearothermophilus), this protein is Small ribosomal subunit protein uS15.